The following is a 239-amino-acid chain: Guanylate kinase (239 aa).

In terms of domain architecture, Guanylate kinase-like spans glycine 55–leucine 235. Residue glycine 62–serine 69 coordinates ATP.

This sequence belongs to the guanylate kinase family.

The protein resides in the cytoplasm. The enzyme catalyses GMP + ATP = GDP + ADP. Essential for recycling GMP and indirectly, cGMP. The polypeptide is Guanylate kinase (gmk) (Mycoplasma pneumoniae (strain ATCC 29342 / M129 / Subtype 1) (Mycoplasmoides pneumoniae)).